A 355-amino-acid polypeptide reads, in one-letter code: Adenine deaminase (355 aa).

Residues histidine 23, histidine 25, and histidine 211 each contribute to the Zn(2+) site. The Proton donor role is filled by glutamate 214. Aspartate 292 lines the Zn(2+) pocket. Residue aspartate 293 coordinates substrate.

It belongs to the metallo-dependent hydrolases superfamily. Adenosine and AMP deaminases family. Adenine deaminase type 2 subfamily. Zn(2+) is required as a cofactor.

It localises to the cytoplasm. Its subcellular location is the nucleus. It catalyses the reaction adenine + H2O + H(+) = hypoxanthine + NH4(+). Functionally, catalyzes the hydrolytic deamination of adenine to hypoxanthine. Plays an important role in the purine salvage pathway and in nitrogen catabolism. The sequence is that of Adenine deaminase from Kluyveromyces lactis (strain ATCC 8585 / CBS 2359 / DSM 70799 / NBRC 1267 / NRRL Y-1140 / WM37) (Yeast).